A 396-amino-acid chain; its full sequence is Microcin B17-processing protein McbD (396 aa).

The 356-residue stretch at 41–396 (ASAAGETLKS…VRESKMVPFP (356 aa)) folds into the YcaO domain.

The protein localises to the cytoplasm. Functionally, necessary to process the inactive microcin B17 (McbA) precursor into the active peptide. This Escherichia coli protein is Microcin B17-processing protein McbD (mcbD).